A 339-amino-acid chain; its full sequence is Probable geranylgeranyl transferase type-2 subunit beta (339 aa).

PFTB repeat units follow at residues 24–65, 72–113, 120–161, 168–209, 216–257, and 264–306; these read IDKH…YLLK, KNEV…IQYD, INSV…SLLK, CEKA…SILN, IDKL…SAID, and NDKL…SLMG. Geranylgeranyl diphosphate is bound by residues 194-196 and 236-248; these read HAG and RPEKSSDVCYSWW. Zn(2+) contacts are provided by Asp242, Cys244, and His294.

Belongs to the protein prenyltransferase subunit beta family. As to quaternary structure, heterodimer of an alpha and a beta subunit. Zn(2+) is required as a cofactor.

The catalysed reaction is geranylgeranyl diphosphate + L-cysteinyl-[protein] = S-geranylgeranyl-L-cysteinyl-[protein] + diphosphate. Its function is as follows. Catalyzes the transfer of a geranyl-geranyl moiety from geranyl-geranyl pyrophosphate to both cysteines in Rab proteins with an -XXCC, -XCXC and -CCXX C-terminal. In Dictyostelium discoideum (Social amoeba), this protein is Probable geranylgeranyl transferase type-2 subunit beta (rabggtb).